We begin with the raw amino-acid sequence, 217 residues long: Somatotropin (217 aa).

An N-terminal signal peptide occupies residues 1–27 (MMAAGPRTSLLLAFALLCLPWTQMVGA). A Zn(2+)-binding site is contributed by His46. A disulfide bridge connects residues Cys79 and Cys190. Ser132 is subject to Phosphoserine. Glu199 provides a ligand contact to Zn(2+). A disulfide bond links Cys207 and Cys215.

Belongs to the somatotropin/prolactin family.

The protein resides in the secreted. Functionally, plays an important role in growth control. Its major role in stimulating body growth is to stimulate the liver and other tissues to secrete IGF1. It stimulates both the differentiation and proliferation of myoblasts. It also stimulates amino acid uptake and protein synthesis in muscle and other tissues. The polypeptide is Somatotropin (GH1) (Giraffa camelopardalis (Giraffe)).